Reading from the N-terminus, the 319-residue chain is Malate dehydrogenase (319 aa).

Residues 10–15 and Asp-34 each bind NAD(+); that span reads GAGNIG. Substrate-binding residues include Arg-83 and Arg-89. NAD(+) is bound by residues Asn-96 and 119–121; that span reads ITN. 2 residues coordinate substrate: Asn-121 and Arg-152. Residue His-176 is the Proton acceptor of the active site.

Belongs to the LDH/MDH superfamily. MDH type 3 family.

The catalysed reaction is (S)-malate + NAD(+) = oxaloacetate + NADH + H(+). Functionally, catalyzes the reversible oxidation of malate to oxaloacetate. In Francisella tularensis subsp. holarctica (strain FTNF002-00 / FTA), this protein is Malate dehydrogenase.